The sequence spans 300 residues: Enoyl-CoA hydratase domain-containing protein 3, mitochondrial (300 aa).

Residues M1–R66 constitute a mitochondrion transit peptide. The tract at residues S32–D54 is disordered. K110 is modified (N6-succinyllysine).

Belongs to the enoyl-CoA hydratase/isomerase family.

It localises to the mitochondrion. Its function is as follows. May play a role in fatty acid biosynthesis and insulin sensitivity. In Rattus norvegicus (Rat), this protein is Enoyl-CoA hydratase domain-containing protein 3, mitochondrial.